Consider the following 270-residue polypeptide: tRNA pseudouridine synthase A (270 aa).

The Nucleophile role is filled by D60. The segment at 107–111 (FHARF) is RNA binding. Position 118 (Y118) interacts with substrate. Residues 168–172 (QCQSR) are interaction with tRNA.

The protein belongs to the tRNA pseudouridine synthase TruA family. Homodimer.

The enzyme catalyses uridine(38/39/40) in tRNA = pseudouridine(38/39/40) in tRNA. Its function is as follows. Formation of pseudouridine at positions 38, 39 and 40 in the anticodon stem and loop of transfer RNAs. The chain is tRNA pseudouridine synthase A from Escherichia coli (strain K12 / DH10B).